A 504-amino-acid chain; its full sequence is tRNA (uracil-5-)-methyltransferase homolog B (504 aa).

The transit peptide at 1 to 16 (MAGLKRRVPLHSLRYF) directs the protein to the mitochondrion. The S-adenosyl-L-methionine site is built by Gln-323, Glu-373, and Asn-423. The active-site Nucleophile is Cys-451. Residue Glu-497 is the Proton acceptor of the active site.

Belongs to the class I-like SAM-binding methyltransferase superfamily. RNA M5U methyltransferase family.

It localises to the mitochondrion. Its subcellular location is the mitochondrion matrix. It catalyses the reaction uridine(54) in tRNA + S-adenosyl-L-methionine = 5-methyluridine(54) in tRNA + S-adenosyl-L-homocysteine + H(+). It carries out the reaction a uridine in 12S rRNA + S-adenosyl-L-methionine = a 5-methyluridine in 12S rRNA + S-adenosyl-L-homocysteine + H(+). In terms of biological role, mitochondrial S-adenosyl-L-methionine-dependent methyltransferase that catalyzes the formation of 5-methyl-uridine in tRNAs and 12S rRNA. Catalyzes the methylation of uridine at position 54 (m5U54) in all tRNAs. Specifically methylates the uridine in position 429 of 12S rRNA (m5U429). Does not affect RNA stability or mitochondrial translation. The protein is tRNA (uracil-5-)-methyltransferase homolog B of Homo sapiens (Human).